Reading from the N-terminus, the 493-residue chain is ATP synthase subunit beta (493 aa).

An ATP-binding site is contributed by 169–176; it reads GGAGVGKT.

Belongs to the ATPase alpha/beta chains family. As to quaternary structure, F-type ATPases have 2 components, CF(1) - the catalytic core - and CF(0) - the membrane proton channel. CF(1) has five subunits: alpha(3), beta(3), gamma(1), delta(1), epsilon(1). CF(0) has three main subunits: a(1), b(2) and c(9-12). The alpha and beta chains form an alternating ring which encloses part of the gamma chain. CF(1) is attached to CF(0) by a central stalk formed by the gamma and epsilon chains, while a peripheral stalk is formed by the delta and b chains.

Its subcellular location is the cell inner membrane. It carries out the reaction ATP + H2O + 4 H(+)(in) = ADP + phosphate + 5 H(+)(out). Functionally, produces ATP from ADP in the presence of a proton gradient across the membrane. The catalytic sites are hosted primarily by the beta subunits. The polypeptide is ATP synthase subunit beta (Gluconacetobacter diazotrophicus (strain ATCC 49037 / DSM 5601 / CCUG 37298 / CIP 103539 / LMG 7603 / PAl5)).